The chain runs to 252 residues: MPQDNTRISDSIKIPDEFVKLLIVSQSHLGGTSTNKSFARYLYGTRPRDRINIIDINATWEKLIIAARAFCGIKHPSSIAVVSTKTFGRKPVVKFCEAVGATPITGRFIPGSFTNSEVKRVYDPRVLIVSDTYADKQAILESQYCNLPTIAFVNTDNSLVGVDIAIPMNNRSPSAIAAGFFILSRLINYMKTGAELVRDMKEVELFLFRDSVELEQLVEEQLLETTDSILNVGKEGILSGIGTGNADEWNSF.

The protein belongs to the universal ribosomal protein uS2 family. Component of the small ribosomal subunit. Mature ribosomes consist of a small (40S) and a large (60S) subunit. The 40S subunit contains about 33 different proteins and 1 molecule of RNA (18S). The 60S subunit contains about 49 different proteins and 3 molecules of RNA (25S, 5.8S and 5S). Interacts with RPS21.

The protein localises to the cytoplasm. Its function is as follows. Required for the assembly and/or stability of the 40S ribosomal subunit. Required for the processing of the 20S rRNA-precursor to mature 18S rRNA in a late step of the maturation of 40S ribosomal subunits. The protein is Small ribosomal subunit protein uS2 of Encephalitozoon cuniculi (strain GB-M1) (Microsporidian parasite).